Consider the following 415-residue polypeptide: PRKCA-binding protein (415 aa).

The PDZ domain occupies 22–105; it reads KVTLQKDAQN…EVTIHYNKLQ (84 aa). Residues cysteine 44 and cysteine 46 each coordinate Zn(2+). Threonine 82 bears the Phosphothreonine mark. An AH domain is found at 144 to 357; the sequence is LCNDGLVKRL…CYAVLRDADV (214 aa). Positions 376–415 are disordered; it reads EEFTDGEEEEEEEDTAAGEPSRDTRGAAGPLDKGGSWCDS. Residues 377-391 show a composition bias toward acidic residues; sequence EFTDGEEEEEEEDTA. Cysteine 413 carries S-palmitoyl cysteine; by DHHC8 lipidation.

As to quaternary structure, monomer and homodimer. Interacts with CXADR. Interacts presynaptically with the glutamate receptors GRIA2, GRIA3, GRIK3, isoform 3 of GRIA4, isoform A of GRM4, GRM7 and GRM8; with NAPA and NAPB; and with BTG2. The interaction with NAPA and NAPB disrupts the interaction with GRIA2, conducting to the internalization of GRIA2. Interacts with PRKCA; with the amine transporters SLC6A2 and SLC6A3; with the channels ASIC1 and ASIC2; with the GTP-binding proteins ARF1 and ARF3; with the ephrin receptor tyrosine kinases EPHA7, EPHB1 and EPHB2; with ERBB2 and through its PDZ domain with the C-terminal tail of PRLHR. Interacts with UNC5A. Interacts (via AH domain) with NCS1/FREQ; in a calcium-dependent manner. Interacts with F-actin and associates with the ARP2/3 complex. Interacts (via PDZ domain) with ARF1 (activated); the interaction blocks Arp2/3 complex inhibition. Interacts with SORCS3. In terms of processing, phosphorylation at Thr-82 appears to inhibit the interaction with AMPA receptors. Post-translationally, palmitoylation on Cys-413 is essential for long-term synaptic depression (LTD). Ubiquitous.

The protein resides in the cytoplasm. It localises to the perinuclear region. The protein localises to the membrane. It is found in the postsynaptic density. Its subcellular location is the synapse. The protein resides in the synaptosome. It localises to the cytoskeleton. Probable adapter protein that bind to and organize the subcellular localization of a variety of membrane proteins containing some PDZ recognition sequence. Involved in the clustering of various receptors, possibly by acting at the receptor internalization level. Plays a role in synaptic plasticity by regulating the trafficking and internalization of AMPA receptors. May be regulated upon PRKCA activation. May regulate ASIC1/ASIC3 channel. Regulates actin polymerization by inhibiting the actin-nucleating activity of the Arp2/3 complex; the function is competitive with nucleation promoting factors and is linked to neuronal morphology regulation and AMPA receptor (AMPAR) endocytosis. Via interaction with the Arp2/3 complex involved in regulation of synaptic plasicity of excitatory synapses and required for spine shrinkage during long-term depression (LTD). Involved in regulation of astrocyte morphology, antagonistic to Arp2/3 complex activator WASL/N-WASP function. The sequence is that of PRKCA-binding protein (PICK1) from Homo sapiens (Human).